The sequence spans 475 residues: FAD-dependent monooxygenase sdgC (475 aa).

A signal peptide spans 1-23; sequence MDKRSFKVIVVGGSIAGLTLAHS. Residues E35, G49, and R126 each coordinate FAD. N236 carries N-linked (GlcNAc...) asparagine glycosylation. A330 contributes to the FAD binding site. Residues 446-466 form a helical membrane-spanning segment; sequence ISGVLLLVIPIIALVYGYSVI.

It belongs to the paxM FAD-dependent monooxygenase family. Requires FAD as cofactor.

It localises to the membrane. It participates in secondary metabolite biosynthesis. Functionally, FAD-dependent monooxygenase; part of the gene cluster that mediates the biosynthesis of the polyenes aspernidgulenes. The carbon backbone of aspernidgulenes is synthesized by the HR-PKS sdgA, which accepts acetyl-CoA as the starter unit and performs malonyl-CoA extensions as well as regioselective methylation and reduction. The resulting nonaketide offloads the HR-PKS by intramolecular lactonization to yield the 5,6-dihydro-alpha-pyrone-containing hexaenoic acids preaspernidgulene A1 and A2. The FAD-dependent monooxygenase sdgC then installs the first epoxide on the penultimate double bond. Subsequently, the FAD-dependent monooxygenase sdgF presumably generates a ketone intermediate through Meinwald rearrangement involving a hydride shift. Next, sdgC introduces another epoxide on the last olefin of the ketone intermediate after E/Z isomerization. The epoxide hydrolase sdgD then catalyzes stereospecific cyclization of the 5,6-dihydro-alpha-pyrone and opening of the epoxide ring to form an oxygenated trimethylcyclopentanone and an oxabicyclo[2.2.1]heptane unit. Finally, the bicyclic unit undergoes hydrolytic cleavage, either spontaneously or catalyzed by sdgD, to assemble the dimethyl-gamma-lactone moiety in aspernidgulene A1. The protein is FAD-dependent monooxygenase sdgC of Emericella nidulans (strain FGSC A4 / ATCC 38163 / CBS 112.46 / NRRL 194 / M139) (Aspergillus nidulans).